The sequence spans 762 residues: uncharacterized protein (762 aa).

The 209-residue stretch at 334 to 542 (IIDILSNYLI…SDEEIAEHIL (209 aa)) folds into the MCM domain. Residue 384–391 (TDPGIGKS) participates in ATP binding.

It belongs to the MCM family.

This is an uncharacterized protein from Methanocaldococcus jannaschii (strain ATCC 43067 / DSM 2661 / JAL-1 / JCM 10045 / NBRC 100440) (Methanococcus jannaschii).